The following is a 182-amino-acid chain: Nucleosome assembly protein 1-like 5 (182 aa).

A disordered region spans residues 1–71; the sequence is MADSENQGPA…APKPKNDFIE (71 aa). 2 stretches are compositionally biased toward low complexity: residues 7 to 21 and 28 to 49; these read QGPA…AAEA and AEGG…SAAG. A coiled-coil region spans residues 81-107; it reads VLALKKLQKRCDKIEAKFDKEFQALEK. Residues 134–182 are disordered; that stretch reads LEGEEEEEEEYEDDEEEGEDEEEEEAAAEAAAGAKHDDAHAEMPDDAKK. The span at 135–160 shows a compositional bias: acidic residues; that stretch reads EGEEEEEEEYEDDEEEGEDEEEEEAA. The segment covering 167-182 has biased composition (basic and acidic residues); sequence AKHDDAHAEMPDDAKK.

This sequence belongs to the nucleosome assembly protein (NAP) family. Predominantly expressed in brain.

The protein resides in the nucleus. This Homo sapiens (Human) protein is Nucleosome assembly protein 1-like 5 (NAP1L5).